Reading from the N-terminus, the 396-residue chain is Bifunctional enzyme Fae/Hps (396 aa).

Residues 1–161 (MMLIGEALIG…HEKDRAAHAV (161 aa)) are formaldehyde-activating enzyme. Residue histidine 17 is the Proton donor of the active site. Substrate-binding residues include aspartate 19, leucine 48, lysine 66, threonine 68, and glutamine 83. The 3-hexulose-6-phosphate synthase stretch occupies residues 162 to 396 (MGFKISKLWD…IDQFRIMTDF (235 aa)).

This sequence in the N-terminal section; belongs to the formaldehyde-activating enzyme family. It in the C-terminal section; belongs to the HPS/KGPDC family. HPS subfamily.

The catalysed reaction is 5,6,7,8-tetrahydromethanopterin + formaldehyde = 5,10-methylenetetrahydromethanopterin + H2O. The enzyme catalyses D-ribulose 5-phosphate + formaldehyde = D-arabino-hex-3-ulose 6-phosphate. It functions in the pathway carbohydrate biosynthesis; D-ribose 5-phosphate biosynthesis. In terms of biological role, catalyzes the condensation of formaldehyde with tetrahydromethanopterin (H(4)MPT) to 5,10-methylenetetrahydromethanopterin. Functionally, catalyzes the reversible formation of ribulose-5-phosphate and formaldehyde from 3-hexulose-6-phosphate. The chain is Bifunctional enzyme Fae/Hps from Methanococcoides burtonii (strain DSM 6242 / NBRC 107633 / OCM 468 / ACE-M).